The primary structure comprises 62 residues: Chromatin protein Cren7 1 (62 aa).

The protein belongs to the Cren7 family. As to quaternary structure, monomer. In terms of processing, methylated at multiple sites, to varying extents.

The protein localises to the chromosome. It is found in the cytoplasm. In terms of biological role, a chromatin protein, binds double-stranded DNA without sequence specificity. Constrains negative DNA supercoils. In Hyperthermus butylicus (strain DSM 5456 / JCM 9403 / PLM1-5), this protein is Chromatin protein Cren7 1 (cren7-1).